Consider the following 80-residue polypeptide: Protein FAM229B (80 aa).

The segment at 1-45 (MPFRFGTQPRRFPVEGGDSSIELESGLSSSASCTGKETSPNRQLR) is disordered. The segment covering 15-32 (EGGDSSIELESGLSSSAS) has biased composition (low complexity). Over residues 33–42 (CTGKETSPNR) the composition is skewed to polar residues.

The protein belongs to the FAM229 family.

The sequence is that of Protein FAM229B (Fam229b) from Mus musculus (Mouse).